Reading from the N-terminus, the 273-residue chain is Ribosomal RNA small subunit methyltransferase A (273 aa).

Residues Asn18, Leu20, Gly45, Glu66, Asp91, and Asn113 each coordinate S-adenosyl-L-methionine.

It belongs to the class I-like SAM-binding methyltransferase superfamily. rRNA adenine N(6)-methyltransferase family. RsmA subfamily.

Its subcellular location is the cytoplasm. It catalyses the reaction adenosine(1518)/adenosine(1519) in 16S rRNA + 4 S-adenosyl-L-methionine = N(6)-dimethyladenosine(1518)/N(6)-dimethyladenosine(1519) in 16S rRNA + 4 S-adenosyl-L-homocysteine + 4 H(+). In terms of biological role, specifically dimethylates two adjacent adenosines (A1518 and A1519) in the loop of a conserved hairpin near the 3'-end of 16S rRNA in the 30S particle. May play a critical role in biogenesis of 30S subunits. The polypeptide is Ribosomal RNA small subunit methyltransferase A (Shigella boydii serotype 18 (strain CDC 3083-94 / BS512)).